Consider the following 66-residue polypeptide: Large ribosomal subunit protein bL33c (66 aa).

This sequence belongs to the bacterial ribosomal protein bL33 family.

The protein resides in the plastid. It is found in the chloroplast. The sequence is that of Large ribosomal subunit protein bL33c from Saccharum officinarum (Sugarcane).